Consider the following 168-residue polypeptide: 6,7-dimethyl-8-ribityllumazine synthase (168 aa).

5-amino-6-(D-ribitylamino)uracil is bound by residues W31, 65–67 (SFE), and 89–91 (CVV). 94 to 95 (DT) is a binding site for (2S)-2-hydroxy-3-oxobutyl phosphate. The active-site Proton donor is H97. Y122 contacts 5-amino-6-(D-ribitylamino)uracil. R136 provides a ligand contact to (2S)-2-hydroxy-3-oxobutyl phosphate.

Belongs to the DMRL synthase family.

It carries out the reaction (2S)-2-hydroxy-3-oxobutyl phosphate + 5-amino-6-(D-ribitylamino)uracil = 6,7-dimethyl-8-(1-D-ribityl)lumazine + phosphate + 2 H2O + H(+). Its pathway is cofactor biosynthesis; riboflavin biosynthesis; riboflavin from 2-hydroxy-3-oxobutyl phosphate and 5-amino-6-(D-ribitylamino)uracil: step 1/2. In terms of biological role, catalyzes the formation of 6,7-dimethyl-8-ribityllumazine by condensation of 5-amino-6-(D-ribitylamino)uracil with 3,4-dihydroxy-2-butanone 4-phosphate. This is the penultimate step in the biosynthesis of riboflavin. The protein is 6,7-dimethyl-8-ribityllumazine synthase of Phocaeicola vulgatus (strain ATCC 8482 / DSM 1447 / JCM 5826 / CCUG 4940 / NBRC 14291 / NCTC 11154) (Bacteroides vulgatus).